Reading from the N-terminus, the 78-residue chain is Sec-independent protein translocase protein TatA (78 aa).

A helical transmembrane segment spans residues 1–21 (MGSLSIWHWIVVLAVVLLLFG). Residues 43–78 (LAEDDEPAKTPAAPPEAPRPLPHQTSSAAEAEKKPV) form a disordered region. A compositionally biased stretch (pro residues) spans 54-63 (AAPPEAPRPL).

It belongs to the TatA/E family. In terms of assembly, the Tat system comprises two distinct complexes: a TatABC complex, containing multiple copies of TatA, TatB and TatC subunits, and a separate TatA complex, containing only TatA subunits. Substrates initially bind to the TatABC complex, which probably triggers association of the separate TatA complex to form the active translocon.

It localises to the cell inner membrane. Part of the twin-arginine translocation (Tat) system that transports large folded proteins containing a characteristic twin-arginine motif in their signal peptide across membranes. TatA could form the protein-conducting channel of the Tat system. The chain is Sec-independent protein translocase protein TatA from Xanthobacter autotrophicus (strain ATCC BAA-1158 / Py2).